The primary structure comprises 325 residues: Beta-ketoacyl-[acyl-carrier-protein] synthase III (325 aa).

Active-site residues include Cys119 and His252. An ACP-binding region spans residues 253-257 (QANIR). Asn282 is an active-site residue.

Belongs to the thiolase-like superfamily. FabH family. Homodimer.

The protein localises to the cytoplasm. The enzyme catalyses malonyl-[ACP] + acetyl-CoA + H(+) = 3-oxobutanoyl-[ACP] + CO2 + CoA. It functions in the pathway lipid metabolism; fatty acid biosynthesis. Functionally, catalyzes the condensation reaction of fatty acid synthesis by the addition to an acyl acceptor of two carbons from malonyl-ACP. Catalyzes the first condensation reaction which initiates fatty acid synthesis and may therefore play a role in governing the total rate of fatty acid production. Possesses both acetoacetyl-ACP synthase and acetyl transacylase activities. Its substrate specificity determines the biosynthesis of branched-chain and/or straight-chain of fatty acids. This Variovorax paradoxus (strain S110) protein is Beta-ketoacyl-[acyl-carrier-protein] synthase III.